The sequence spans 280 residues: Fasciclin-like arabinogalactan protein 3 (280 aa).

The first 24 residues, Met1 to Ala24, serve as a signal peptide directing secretion. The FAS1 domain occupies Val25–Ile169. N-linked (GlcNAc...) asparagine glycans are attached at residues Asn26, Asn126, and Asn159. Over residues Val180–Ser193 the composition is skewed to pro residues. Residues Val180–Gly262 form a disordered region. Residues Ala219 to Pro234 show a composition bias toward low complexity. Ser256 is lipidated: GPI-anchor amidated serine. A propeptide spans Ser257–Phe280 (removed in mature form).

The protein belongs to the fasciclin-like AGP family.

The protein localises to the cell membrane. May be a cell surface adhesion protein. This chain is Fasciclin-like arabinogalactan protein 3 (FLA3), found in Arabidopsis thaliana (Mouse-ear cress).